Reading from the N-terminus, the 348-residue chain is Lipopolysaccharide heptosyltransferase 2 (348 aa).

It belongs to the glycosyltransferase 9 family.

It carries out the reaction an L-alpha-D-Hep-(1-&gt;5)-[alpha-Kdo-(2-&gt;4)]-alpha-Kdo-(2-&gt;6)-lipid A + ADP-L-glycero-beta-D-manno-heptose = an L-alpha-D-Hep-(1-&gt;3)-L-alpha-D-Hep-(1-&gt;5)-[alpha-Kdo-(2-&gt;4)]-alpha-Kdo-(2-&gt;6)-lipid A + ADP + H(+). It catalyses the reaction L-alpha-D-Hep-(1-&gt;5)-[alpha-Kdo-(2-&gt;4)]-alpha-Kdo-(2-&gt;6)-lipid A (E. coli) + ADP-L-glycero-beta-D-manno-heptose = L-alpha-D-Hep-(1-&gt;3)-L-alpha-D-Hep-(1-&gt;5)-[alpha-Kdo-(2-&gt;4)]-alpha-Kdo-(2-&gt;6)-lipid A (E. coli) + ADP + H(+). It participates in bacterial outer membrane biogenesis; LPS core biosynthesis. In terms of biological role, glycosyltransferase involved in the biosynthesis of the core oligosaccharide region of lipopolysaccharide (LPS). Catalyzes the addition of the second heptose unit to the heptosyl-Kdo2-lipid A module. The analog ADP-mannose can serve as an alternative donor in place of ADP-L-glycero-D-manno-heptose, but with lower efficiency. This chain is Lipopolysaccharide heptosyltransferase 2, found in Escherichia coli (strain K12).